A 646-amino-acid chain; its full sequence is Epithelial sodium channel subunit beta-2 (646 aa).

At 1-57 the chain is on the cytoplasmic side; sequence MIQGKLKRLKRYFTRALHRIQKGPGYTYKELLVWFCDNTNTHGPKRIIKEGPKKRVM. A helical transmembrane segment spans residues 58–78; that stretch reads WFILTLVFAGLVFWQWGLLIL. Over 79 to 551 the chain is Extracellular; that stretch reads TYLSYGVSVS…GGQFGFWMGG (473 aa). 8 disulfide bridges follow: C104-C290, C214-C221, C267-C274, C380-C467, C405-C463, C409-C459, C418-C445, and C420-C434. The helical transmembrane segment at 552–572 threads the bilayer; the sequence is SVLCIIEFGEIIIDCMWITIL. Over 573 to 646 the chain is Cytoplasmic; sequence KLLAWIRNRR…IEPVSSDEEN (74 aa). A disordered region spans residues 586-646; that stretch reads QRPQYADPPP…IEPVSSDEEN (61 aa). Over residues 610–619 the composition is skewed to basic and acidic residues; sequence QHDDGNHVTE.

Belongs to the amiloride-sensitive sodium channel (TC 1.A.6) family. SCNN1B subfamily. Component of the heterotrimeric epithelial sodium channel (ENaC) composed of an alpha/SCNN1A, a beta/SCNN1B and a gamma/SCNN1G subunit.

It localises to the apical cell membrane. Its subcellular location is the cytoplasmic vesicle membrane. The enzyme catalyses Na(+)(in) = Na(+)(out). Originally identified and characterized by its inhibition by the diuretic drug amiloride. This is one of the three pore-forming subunits of the heterotrimeric epithelial sodium channel (ENaC), a critical regulator of sodium balance and fluid homeostasis. ENaC operates in epithelial tissues, where it mediates the electrodiffusion of sodium ions from extracellular fluid through the apical membrane of cells, with water following osmotically. The protein is Epithelial sodium channel subunit beta-2 (scnn1b-b) of Xenopus laevis (African clawed frog).